The following is an 86-amino-acid chain: UPF0213 protein OB0043 (86 aa).

The region spanning 3–80 (EQHYVYILRC…LPRFEKLKLI (78 aa)) is the GIY-YIG domain.

This sequence belongs to the UPF0213 family.

This Oceanobacillus iheyensis (strain DSM 14371 / CIP 107618 / JCM 11309 / KCTC 3954 / HTE831) protein is UPF0213 protein OB0043.